The primary structure comprises 560 residues: Cytosolic purine 5'-nucleotidase (560 aa).

The Nucleophile role is filled by D52. IMP-binding residues include D52 and D54. The Mg(2+) site is built by D52 and D54. D54 functions as the Proton donor in the catalytic mechanism. ATP contacts are provided by R144 and N154. IMP-binding residues include R202, D206, K215, T249, N250, S251, and K292. D351 provides a ligand contact to Mg(2+). A Phosphoserine modification is found at S418. Residues Q453 and R456 each contribute to the ATP site. Residues S502, S511, and S527 each carry the phosphoserine modification. Residues 541-560 (PQEITHCHDEDDDEEEEEEE) are disordered. The tract at residues 548–560 (HDEDDDEEEEEEE) is required for tetramer assembly. Over residues 550 to 560 (EDDDEEEEEEE) the composition is skewed to acidic residues.

Belongs to the 5'(3')-deoxyribonucleotidase family. As to quaternary structure, homotetramer. Mg(2+) is required as a cofactor.

The protein resides in the cytoplasm. Its subcellular location is the cytosol. It catalyses the reaction a ribonucleoside 5'-phosphate + H2O = a ribonucleoside + phosphate. The enzyme catalyses a 2'-deoxyribonucleoside + a ribonucleoside 5'-phosphate = a ribonucleoside + a 2'-deoxyribonucleoside 5'-phosphate. The catalysed reaction is IMP + H2O = inosine + phosphate. It carries out the reaction GMP + H2O = guanosine + phosphate. It catalyses the reaction dIMP + H2O = 2'-deoxyinosine + phosphate. The enzyme catalyses dGMP + H2O = 2'-deoxyguanosine + phosphate. The catalysed reaction is XMP + H2O = xanthosine + phosphate. It carries out the reaction inosine + GMP = guanosine + IMP. It catalyses the reaction dGMP + inosine = 2'-deoxyguanosine + IMP. The enzyme catalyses dIMP + inosine = 2'-deoxyinosine + IMP. The catalysed reaction is inosine + UMP = uridine + IMP. It carries out the reaction inosine + CMP = cytidine + IMP. It catalyses the reaction inosine + AMP = IMP + adenosine. With respect to regulation, allosterically activated by various compounds including ATP, 2,3-BPG/2,3-Bisphosphoglyceric acid and Ap4A/P1,P4-bis(5'-adenosyl) tetraphosphate. Binding of an allosteric activator is a prerequisiste to magnesium and substrate binding. Inhibited by inorganic phosphate. In terms of biological role, broad specificity cytosolic 5'-nucleotidase that catalyzes the dephosphorylation of 6-hydroxypurine nucleoside 5'-monophosphates. In addition, possesses a phosphotransferase activity by which it can transfer a phosphate from a donor nucleoside monophosphate to an acceptor nucleoside, preferably inosine, deoxyinosine and guanosine. Has the highest activities for IMP and GMP followed by dIMP, dGMP and XMP. Could also catalyze the transfer of phosphates from pyrimidine monophosphates but with lower efficiency. Through these activities regulates the purine nucleoside/nucleotide pools within the cell. The polypeptide is Cytosolic purine 5'-nucleotidase (Rattus norvegicus (Rat)).